The chain runs to 438 residues: Probable tRNA pseudouridine synthase D (438 aa).

The active-site Nucleophile is Asp-86. Positions 165–390 (GVPNFFGIQR…SKGTRREVLL (226 aa)) constitute a TRUD domain.

It belongs to the pseudouridine synthase TruD family.

The catalysed reaction is uridine(13) in tRNA = pseudouridine(13) in tRNA. Functionally, could be responsible for synthesis of pseudouridine from uracil-13 in transfer RNAs. The protein is Probable tRNA pseudouridine synthase D of Methanosarcina mazei (strain ATCC BAA-159 / DSM 3647 / Goe1 / Go1 / JCM 11833 / OCM 88) (Methanosarcina frisia).